The following is a 274-amino-acid chain: SWI/SNF chromatin-remodeling complex subunit snf30 (274 aa).

Polar residues-rich tracts occupy residues 123-150 (TLSY…GTMQ) and 157-167 (PSLTRSDSVSS). Residues 123–167 (TLSYPPSNGDSSSYANGTDLHGNTGTMQQEEKANPSLTRSDSVSS) form a disordered region.

Component of the SWI/SNF global transcription activator complex composed of at least arp9, arp42, snf5, snf22, snf30, sbf59, sol1, ssr1, ssr2, ssr3, ssr4 and tfg3.

It localises to the cytoplasm. The protein localises to the nucleus. Component of the SWI/SNF complex, an ATP-dependent chromatin remodeling complex, required for the positive and negative regulation of gene expression of a large number of genes. It changes chromatin structure by altering DNA-histone contacts within a nucleosome, leading eventually to a change in nucleosome position, thus facilitating or repressing binding of gene-specific transcription factors. This Schizosaccharomyces pombe (strain 972 / ATCC 24843) (Fission yeast) protein is SWI/SNF chromatin-remodeling complex subunit snf30 (snf30).